Reading from the N-terminus, the 915-residue chain is Metabotropic glutamate receptor 7 (915 aa).

Residues 1–34 (MVQLRKLLRVLTLMKFPCCVLEVLLCALAAAARG) form the signal peptide. Topologically, residues 35-590 (QEMYAPHSIR…IIKLEWHSPW (556 aa)) are extracellular. The cysteines at positions 67 and 109 are disulfide-linked. N-linked (GlcNAc...) asparagine glycosylation occurs at Asn-98. Residues Ser-159, 180–182 (AST), Tyr-230, and Asp-314 each bind L-glutamate. Intrachain disulfides connect Cys-249–Cys-541, Cys-374–Cys-390, Cys-430–Cys-437, Cys-523–Cys-542, Cys-527–Cys-545, Cys-548–Cys-560, and Cys-563–Cys-576. An L-glutamate-binding site is contributed by Lys-407. Residues Asn-458 and Asn-486 are each glycosylated (N-linked (GlcNAc...) asparagine). Asn-572 carries an N-linked (GlcNAc...) asparagine glycan. A helical transmembrane segment spans residues 591–615 (AVIPVFLAMLGIIATIFVMATFIRY). Over 616 to 627 (NDTPIVRASGRE) the chain is Cytoplasmic. The chain crosses the membrane as a helical span at residues 628 to 648 (LSYVLLTGIFLCYIITFLMIA). Topologically, residues 649-654 (KPDVAV) are extracellular. Residues 655-675 (CSFRRVFLGLGMCISYAALLT) form a helical membrane-spanning segment. Over 676-702 (KTNRIYRIFEQGKKSVTAPRLISPTSQ) the chain is Cytoplasmic. A helical membrane pass occupies residues 703 to 723 (LAITSSLISVQLLGVFIWFGV). At 724–753 (DPPNIIIDYDEHKTMNPEQARGVLKCDITD) the chain is on the extracellular side. A helical membrane pass occupies residues 754-775 (LQIICSLGYSILLMVTCTVYAI). Topologically, residues 776–788 (KTRGVPENFNEAK) are cytoplasmic. A helical membrane pass occupies residues 789–810 (PIGFTMYTTCIVWLAFIPIFFG). Topologically, residues 811–825 (TAQSAEKLYIQTTTL) are extracellular. The helical transmembrane segment at 826–850 (TISMNLSASVALGMLYMPKVYIIIF) threads the bilayer. Over 851–915 (HPELNVQKRK…KYVSYNNLVI (65 aa)) the chain is Cytoplasmic. The segment at 874–895 (SRLSHKPSDRPNGEAKTELCEN) is disordered. The span at 879–892 (KPSDRPNGEAKTEL) shows a compositional bias: basic and acidic residues. A Phosphoserine modification is found at Ser-900.

It belongs to the G-protein coupled receptor 3 family. Homodimer. Interacts with PICK1. Post-translationally, N-glycosylated. In terms of tissue distribution, expressed in many areas of the brain, especially in the cerebral cortex, hippocampus, and cerebellum. Expression of GRM7 isoforms in non-neuronal tissues appears to be restricted to isoform 3 and isoform 4.

It localises to the cell membrane. In terms of biological role, G-protein coupled receptor activated by glutamate that regulates axon outgrowth through the MAPK-cAMP-PKA signaling pathway during neuronal development. Ligand binding causes a conformation change that triggers signaling via guanine nucleotide-binding proteins (G proteins) and modulates the activity of downstream effectors, such as adenylate cyclase that it inhibits. The sequence is that of Metabotropic glutamate receptor 7 (GRM7) from Homo sapiens (Human).